The sequence spans 393 residues: BEN domain-containing protein 5 (393 aa).

The stretch at 169–212 forms a coiled coil; sequence RVLYEELLRSYQQQQQEMKHIQHELERTRKQLVQQAKKLKDYGS. The BEN domain maps to 274-380; the sequence is GSGVWVNEEK…EKIMDINKSC (107 aa).

Its function is as follows. May act as a transcriptional repressor. The polypeptide is BEN domain-containing protein 5 (bend5) (Xenopus laevis (African clawed frog)).